Here is a 102-residue protein sequence, read N- to C-terminus: Urease subunit beta (102 aa).

It belongs to the urease beta subunit family. In terms of assembly, heterotrimer of UreA (gamma), UreB (beta) and UreC (alpha) subunits. Three heterotrimers associate to form the active enzyme.

The protein localises to the cytoplasm. It carries out the reaction urea + 2 H2O + H(+) = hydrogencarbonate + 2 NH4(+). It functions in the pathway nitrogen metabolism; urea degradation; CO(2) and NH(3) from urea (urease route): step 1/1. In Alteromonas mediterranea (strain DSM 17117 / CIP 110805 / LMG 28347 / Deep ecotype), this protein is Urease subunit beta.